Here is a 300-residue protein sequence, read N- to C-terminus: MTQILVKNAFSWVNIAEDVCKFIPNCKLTVIDKEAIPSVEDTNVIYIGDLMNVKTISMLERIKAKNVVLWVDETRVPKTSYSLKNLKYNYWIVPVSQWNKEVYEEHIGHTEEIIPRCTEFRRTEGKRRGNVLFGVVSFTPGVYKRYEELLLAVDYYRKNYGELEIYAYGHTEGLPSFPGVHNMGRLGKSEIQKLYSIADFAIELGIEAFGMPSIEAWAMQVPMLYGNVNDVRNHAYGVSIDPVDFDAIDFGEYILPVPIYDEYKLAEKIREVAEIEEVPELPEKYRCSYTAKKLISYLEA.

It belongs to the glycosyltransferase group 1 family. Glycosyltransferase 4 subfamily.

The sequence is that of Putative glycosyltransferase ORF300 from Acidianus hospitalis (AFV-1).